The following is a 144-amino-acid chain: Nucleoside diphosphate kinase (144 aa).

ATP contacts are provided by K9, F57, R85, T91, R102, and N112. H120 serves as the catalytic Pros-phosphohistidine intermediate.

It belongs to the NDK family. In terms of assembly, homotetramer. Mg(2+) serves as cofactor.

Its subcellular location is the cytoplasm. It catalyses the reaction a 2'-deoxyribonucleoside 5'-diphosphate + ATP = a 2'-deoxyribonucleoside 5'-triphosphate + ADP. The catalysed reaction is a ribonucleoside 5'-diphosphate + ATP = a ribonucleoside 5'-triphosphate + ADP. Major role in the synthesis of nucleoside triphosphates other than ATP. The ATP gamma phosphate is transferred to the NDP beta phosphate via a ping-pong mechanism, using a phosphorylated active-site intermediate. The chain is Nucleoside diphosphate kinase from Streptococcus uberis (strain ATCC BAA-854 / 0140J).